The chain runs to 119 residues: uncharacterized protein (119 aa).

This is an uncharacterized protein from Escherichia coli O157:H7.